The sequence spans 367 residues: Avirulence protein ATR5 (367 aa).

A signal peptide spans methionine 1–alanine 16. An N-linked (GlcNAc...) asparagine glycan is attached at asparagine 20. A disordered region spans residues asparagine 33–threonine 65. The segment covering arginine 54–threonine 65 has biased composition (basic and acidic residues). Residues threonine 61–arginine 64 carry the dEER motif.

This sequence belongs to the RxLR effector family.

Its subcellular location is the secreted. The protein localises to the host cell. Functionally, secreted effector that acts as an elicitor of hypersensitive response (HR) specifically on plants carrying defense protein RPP5. This Hyaloperonospora arabidopsidis (strain Emoy2) (Downy mildew agent) protein is Avirulence protein ATR5.